We begin with the raw amino-acid sequence, 746 residues long: Eukaryotic translation initiation factor 3 subunit B (746 aa).

A compositionally biased stretch (basic and acidic residues) spans Met-1–Ala-11. A disordered region spans residues Met-1–Glu-20. The RRM domain maps to Thr-42–Asp-128. 7 WD repeats span residues Asp-195–Arg-234, Pro-247–Ala-294, Pro-307–Lys-346, Ile-349–Asn-386, Thr-458–Pro-500, Leu-517–Glu-560, and Ala-575–Glu-620.

Belongs to the eIF-3 subunit B family. Component of the eukaryotic translation initiation factor 3 (eIF-3) complex.

Its subcellular location is the cytoplasm. Its function is as follows. RNA-binding component of the eukaryotic translation initiation factor 3 (eIF-3) complex, which is involved in protein synthesis of a specialized repertoire of mRNAs and, together with other initiation factors, stimulates binding of mRNA and methionyl-tRNAi to the 40S ribosome. The eIF-3 complex specifically targets and initiates translation of a subset of mRNAs involved in cell proliferation. This chain is Eukaryotic translation initiation factor 3 subunit B, found in Pyricularia oryzae (strain 70-15 / ATCC MYA-4617 / FGSC 8958) (Rice blast fungus).